The chain runs to 440 residues: Streptokinase C (440 aa).

The N-terminal stretch at 1–26 (MKNYLSFGMFALLFALTFGTVNSVQA) is a signal peptide.

This protein is not a protease, but it activates plasminogen by complexing with it. As a potential virulence factor, it is thought to prevent the formation of effective fibrin barriers around the site of infection, thereby contributing to the invasiveness of the cells. This Streptococcus dysgalactiae subsp. equisimilis (Streptococcus equisimilis) protein is Streptokinase C (skc).